Reading from the N-terminus, the 766-residue chain is LPS-assembly protein LptD (766 aa).

A signal peptide spans 1-18 (MNIRYLLLLSLMPHLVWA).

It belongs to the LptD family. As to quaternary structure, component of the lipopolysaccharide transport and assembly complex. Interacts with LptE and LptA.

It localises to the cell outer membrane. Together with LptE, is involved in the assembly of lipopolysaccharide (LPS) at the surface of the outer membrane. In Shewanella denitrificans (strain OS217 / ATCC BAA-1090 / DSM 15013), this protein is LPS-assembly protein LptD.